Reading from the N-terminus, the 123-residue chain is Small ribosomal subunit protein uS12c (123 aa).

This sequence belongs to the universal ribosomal protein uS12 family. Part of the 30S ribosomal subunit.

It localises to the plastid. It is found in the chloroplast. Functionally, with S4 and S5 plays an important role in translational accuracy. Located at the interface of the 30S and 50S subunits. The chain is Small ribosomal subunit protein uS12c (rps12) from Physcomitrium patens (Spreading-leaved earth moss).